Here is a 154-residue protein sequence, read N- to C-terminus: Small ribosomal subunit protein uS13 (154 aa).

Belongs to the universal ribosomal protein uS13 family.

It is found in the cytoplasm. In terms of biological role, located at the top of the head of the 40S subunit, it contacts several helices of the 18S rRNA. In Dictyostelium discoideum (Social amoeba), this protein is Small ribosomal subunit protein uS13 (rps18).